A 127-amino-acid polypeptide reads, in one-letter code: Large ribosomal subunit protein eL8 (127 aa).

Belongs to the eukaryotic ribosomal protein eL8 family. Part of the 50S ribosomal subunit. Probably part of the RNase P complex.

The protein resides in the cytoplasm. Its function is as follows. Multifunctional RNA-binding protein that recognizes the K-turn motif in ribosomal RNA, the RNA component of RNase P, box H/ACA, box C/D and box C'/D' sRNAs. The chain is Large ribosomal subunit protein eL8 from Saccharolobus islandicus (strain Y.N.15.51 / Yellowstone #2) (Sulfolobus islandicus).